The primary structure comprises 1070 residues: DNA-directed RNA polymerase subunit beta (1070 aa).

The protein belongs to the RNA polymerase beta chain family. In plastids the minimal PEP RNA polymerase catalytic core is composed of four subunits: alpha, beta, beta', and beta''. When a (nuclear-encoded) sigma factor is associated with the core the holoenzyme is formed, which can initiate transcription.

It localises to the plastid. It is found in the chloroplast. It catalyses the reaction RNA(n) + a ribonucleoside 5'-triphosphate = RNA(n+1) + diphosphate. Functionally, DNA-dependent RNA polymerase catalyzes the transcription of DNA into RNA using the four ribonucleoside triphosphates as substrates. This chain is DNA-directed RNA polymerase subunit beta, found in Buxus microphylla (Littleleaf boxwood).